We begin with the raw amino-acid sequence, 345 residues long: Uroporphyrinogen decarboxylase (345 aa).

Substrate is bound by residues 27-31 (RQAGR), phenylalanine 46, aspartate 76, tyrosine 152, serine 207, and histidine 321.

Belongs to the uroporphyrinogen decarboxylase family. As to quaternary structure, homodimer.

It is found in the cytoplasm. The catalysed reaction is uroporphyrinogen III + 4 H(+) = coproporphyrinogen III + 4 CO2. Its pathway is porphyrin-containing compound metabolism; protoporphyrin-IX biosynthesis; coproporphyrinogen-III from 5-aminolevulinate: step 4/4. Catalyzes the decarboxylation of four acetate groups of uroporphyrinogen-III to yield coproporphyrinogen-III. The protein is Uroporphyrinogen decarboxylase of Staphylococcus aureus (strain USA300 / TCH1516).